An 827-amino-acid polypeptide reads, in one-letter code: N-terminal kinase-like protein (827 aa).

The Protein kinase domain occupies 1–309 (MWFWSRDPAR…PEDFCRHKIL (309 aa)). HEAT repeat units follow at residues 345-383 (IIPV…VNAQ), 384-422 (IFPH…LNME), and 502-540 (VLPV…EDPS). Residues 586-624 (DAAASEGASAPSTASEASKPDTAPSSSAPPAAASTAPTS) show a composition bias toward low complexity. A disordered region spans residues 586 to 827 (DAAASEGASA…PLKLGVRKLD (242 aa)). A compositionally biased stretch (basic and acidic residues) spans 630 to 640 (EKGAPDNSLDR). Positions 641 to 652 (WDDEDWGSLEDA) are enriched in acidic residues. The span at 667 to 678 (DWGHGKTQEKTV) shows a compositional bias: basic and acidic residues. 2 stretches are compositionally biased toward polar residues: residues 679-690 (DFSSSRSKTKQV) and 737-746 (NWDTSGSSGR). A compositionally biased stretch (acidic residues) spans 774 to 783 (GGDDNWESVE). Residues 788-817 (LSKAEMARKKREERQKEIEAKRAERRAAKG) are a coiled coil. The segment covering 792–814 (EMARKKREERQKEIEAKRAERRA) has biased composition (basic and acidic residues).

Belongs to the protein kinase superfamily.

In terms of biological role, regulates COPI-mediated retrograde protein traffic at the interface between the Golgi apparatus and the endoplasmic reticulum. Involved in the maintenance of the Golgi apparatus morphology. The sequence is that of N-terminal kinase-like protein (scyl1) from Xenopus tropicalis (Western clawed frog).